The primary structure comprises 145 residues: 3-dehydroquinate dehydratase 1 (145 aa).

Y24 functions as the Proton acceptor in the catalytic mechanism. The substrate site is built by N75, H81, and D88. The Proton donor role is filled by H101. Substrate-binding positions include I102 to S103 and R112.

Belongs to the type-II 3-dehydroquinase family. Homododecamer.

It carries out the reaction 3-dehydroquinate = 3-dehydroshikimate + H2O. The protein operates within metabolic intermediate biosynthesis; chorismate biosynthesis; chorismate from D-erythrose 4-phosphate and phosphoenolpyruvate: step 3/7. Catalyzes a trans-dehydration via an enolate intermediate. In Agrobacterium fabrum (strain C58 / ATCC 33970) (Agrobacterium tumefaciens (strain C58)), this protein is 3-dehydroquinate dehydratase 1 (aroQ1).